The chain runs to 258 residues: Sugar fermentation stimulation protein homolog (258 aa).

Belongs to the SfsA family.

In Prochlorococcus marinus (strain NATL2A), this protein is Sugar fermentation stimulation protein homolog.